Reading from the N-terminus, the 552-residue chain is Terpene synthase 5 (552 aa).

Asp307, Asp311, and Glu457 together coordinate Mg(2+). The DDXXD motif signature appears at 307–311 (DDTYD).

Belongs to the terpene synthase family. Mg(2+) is required as a cofactor.

In terms of biological role, catalyzes the cyclization of farnesyl diphosphate to multiple sesquiterpenes, such as olefins and sesquiterpene alcohols. In Ricinus communis (Castor bean), this protein is Terpene synthase 5 (TPS5).